We begin with the raw amino-acid sequence, 473 residues long: Siroheme synthase 1 (473 aa).

The precorrin-2 dehydrogenase /sirohydrochlorin ferrochelatase stretch occupies residues 1-204 (MDYFPIFCQL…NDHVQADQHV (204 aa)). Residues 22–23 (EI) and 43–44 (CE) each bind NAD(+). Ser-128 is modified (phosphoserine). The interval 216–473 (GEVVLVGAGP…KVTECVAHVG (258 aa)) is uroporphyrinogen-III C-methyltransferase. Residue Pro-225 participates in S-adenosyl-L-methionine binding. Asp-248 serves as the catalytic Proton acceptor. Residue Lys-270 is the Proton donor of the active site. Residues 301 to 303 (GGD), Ile-306, 331 to 332 (TA), Met-382, and Gly-411 each bind S-adenosyl-L-methionine.

It in the N-terminal section; belongs to the precorrin-2 dehydrogenase / sirohydrochlorin ferrochelatase family. The protein in the C-terminal section; belongs to the precorrin methyltransferase family.

It carries out the reaction uroporphyrinogen III + 2 S-adenosyl-L-methionine = precorrin-2 + 2 S-adenosyl-L-homocysteine + H(+). It catalyses the reaction precorrin-2 + NAD(+) = sirohydrochlorin + NADH + 2 H(+). The catalysed reaction is siroheme + 2 H(+) = sirohydrochlorin + Fe(2+). It functions in the pathway cofactor biosynthesis; adenosylcobalamin biosynthesis; precorrin-2 from uroporphyrinogen III: step 1/1. The protein operates within cofactor biosynthesis; adenosylcobalamin biosynthesis; sirohydrochlorin from precorrin-2: step 1/1. Its pathway is porphyrin-containing compound metabolism; siroheme biosynthesis; precorrin-2 from uroporphyrinogen III: step 1/1. It participates in porphyrin-containing compound metabolism; siroheme biosynthesis; siroheme from sirohydrochlorin: step 1/1. It functions in the pathway porphyrin-containing compound metabolism; siroheme biosynthesis; sirohydrochlorin from precorrin-2: step 1/1. Multifunctional enzyme that catalyzes the SAM-dependent methylations of uroporphyrinogen III at position C-2 and C-7 to form precorrin-2 via precorrin-1. Then it catalyzes the NAD-dependent ring dehydrogenation of precorrin-2 to yield sirohydrochlorin. Finally, it catalyzes the ferrochelation of sirohydrochlorin to yield siroheme. The polypeptide is Siroheme synthase 1 (Yersinia pestis (strain Pestoides F)).